The chain runs to 233 residues: Biosynthetic peptidoglycan transglycosylase (233 aa).

A helical membrane pass occupies residues 8–28 (LIALPVGIFIFFNAYVYGNII).

This sequence belongs to the glycosyltransferase 51 family.

The protein resides in the cell inner membrane. The enzyme catalyses [GlcNAc-(1-&gt;4)-Mur2Ac(oyl-L-Ala-gamma-D-Glu-L-Lys-D-Ala-D-Ala)](n)-di-trans,octa-cis-undecaprenyl diphosphate + beta-D-GlcNAc-(1-&gt;4)-Mur2Ac(oyl-L-Ala-gamma-D-Glu-L-Lys-D-Ala-D-Ala)-di-trans,octa-cis-undecaprenyl diphosphate = [GlcNAc-(1-&gt;4)-Mur2Ac(oyl-L-Ala-gamma-D-Glu-L-Lys-D-Ala-D-Ala)](n+1)-di-trans,octa-cis-undecaprenyl diphosphate + di-trans,octa-cis-undecaprenyl diphosphate + H(+). Its pathway is cell wall biogenesis; peptidoglycan biosynthesis. Its function is as follows. Peptidoglycan polymerase that catalyzes glycan chain elongation from lipid-linked precursors. The polypeptide is Biosynthetic peptidoglycan transglycosylase (Neisseria meningitidis serogroup A / serotype 4A (strain DSM 15465 / Z2491)).